The primary structure comprises 322 residues: Protein mono-ADP-ribosyltransferase PARP16 (322 aa).

The Cytoplasmic segment spans residues 1 to 287; it reads MQLSNRAAAR…RASSQLSWLS (287 aa). Positions 5–91 constitute a PARP alpha-helical domain; it reads NRAAAREAAS…AWDLVSWILS (87 aa). Positions 94–279 constitute a PARP catalytic domain; sequence ILTIHSAKKA…VYSQKQPKRA (186 aa). NAD(+) contacts are provided by histidine 152, tyrosine 182, and tyrosine 254. Residues 288–308 traverse the membrane as a helical segment; the sequence is SHWFVIMMSLYLLLLLIVSVT. Over 309 to 322 the chain is Lumenal; the sequence is NSSVFHHFWNRVKR.

Belongs to the ARTD/PARP family. In terms of assembly, interacts with KPNB1. Auto-mono-ADP-ribosylated.

It is found in the endoplasmic reticulum membrane. It carries out the reaction L-aspartyl-[protein] + NAD(+) = 4-O-(ADP-D-ribosyl)-L-aspartyl-[protein] + nicotinamide. The enzyme catalyses L-lysyl-[protein] + NAD(+) = N(6)-(ADP-D-ribosyl)-L-lysyl-[protein] + nicotinamide + H(+). It catalyses the reaction L-glutamyl-[protein] + NAD(+) = 5-O-(ADP-D-ribosyl)-L-glutamyl-[protein] + nicotinamide. With respect to regulation, in absence of activation signal, PARP16 is autoinhibited by the PARP alpha-helical domain (also named HD region), which prevents effective NAD(+)-binding. Activity is highly stimulated by signals, which unfold the PARP alpha-helical domain, relieving autoinhibition. Functionally, intracellular mono-ADP-ribosyltransferase that plays a role in different processes, such as protein translation and unfolded protein response (UPR), through the mono-ADP-ribosylation of proteins involved in those processes. Acts as an inhibitor of protein translation by catalyzing mono-ADP-ribosylation of ribosomal subunits, such as RPL14 and RPS6, thereby inhibiting polysome assembly and mRNA loading. Mono-ADP-ribosylation of ribosomal subunits is promoted by NMNAT2. Involved in the unfolded protein response (UPR) by ADP-ribosylating and activating EIF2AK3 and ERN1, two important UPR effectors. May also mediate mono-ADP-ribosylation of karyopherin KPNB1 a nuclear import factor. May not modify proteins on arginine or cysteine residues compared to other mono-ADP-ribosyltransferases. The protein is Protein mono-ADP-ribosyltransferase PARP16 of Mus musculus (Mouse).